Reading from the N-terminus, the 359-residue chain is Alanine racemase (359 aa).

The active-site Proton acceptor; specific for D-alanine is the K34. N6-(pyridoxal phosphate)lysine is present on K34. Residue R129 coordinates substrate. The Proton acceptor; specific for L-alanine role is filled by Y256. M304 is a substrate binding site.

The protein belongs to the alanine racemase family. The cofactor is pyridoxal 5'-phosphate.

It carries out the reaction L-alanine = D-alanine. The protein operates within amino-acid biosynthesis; D-alanine biosynthesis; D-alanine from L-alanine: step 1/1. Catalyzes the interconversion of L-alanine and D-alanine. May also act on other amino acids. The chain is Alanine racemase (alr) from Photobacterium profundum (strain SS9).